The sequence spans 292 residues: Nucleotide-binding protein azo0399 (292 aa).

ATP is bound at residue 8–15 (GLSGSGKS). 57–60 (DMRS) serves as a coordination point for GTP.

The protein belongs to the RapZ-like family.

In terms of biological role, displays ATPase and GTPase activities. The sequence is that of Nucleotide-binding protein azo0399 from Azoarcus sp. (strain BH72).